A 375-amino-acid chain; its full sequence is Fluoride export protein 1 (375 aa).

The Cytoplasmic portion of the chain corresponds to 1–11 (MIFNPVISNHK). The helical transmembrane segment at 12-32 (LSHYIHVFCTFTTFCILGTET) threads the bilayer. Residues 33–34 (RQ) are Extracellular-facing. A helical membrane pass occupies residues 35–55 (AITALSTYTPAFVTAPTVLWS). The Cytoplasmic portion of the chain corresponds to 56-79 (NCSSCMLMGIMQSLNAYTWMKDHQ). A helical membrane pass occupies residues 80–100 (VLFLGVTTGYCGALSSFSSML). At 101–127 (LEMFEHSTNLTNGNIANHTKLPNRAYG) the chain is on the extracellular side. N-linked (GlcNAc...) asparagine glycans are attached at residues N109 and N117. Residues 128-148 (IMEFLSVLLVHLMVSMGSLIF) form a helical membrane-spanning segment. The Cytoplasmic portion of the chain corresponds to 149 to 213 (GRQLGKEVIV…FKKFFDIVDK (65 aa)). A helical transmembrane segment spans residues 214–234 (LAYALAFPLIILFVVLCAYYE). N235 carries an N-linked (GlcNAc...) asparagine glycan. At 235–241 (NYSRGKW) the chain is on the extracellular side. Residues 242 to 262 (TLPCLFGIFAGFLRYWLAEMF) traverse the membrane as a helical segment. The Cytoplasmic portion of the chain corresponds to 263–268 (NKTNKK). The chain crosses the membrane as a helical span at residues 269-289 (FPLGTFLANVFATLLIGIFTM). Topologically, residues 290 to 310 (VQRGKKHFSTDVPIVNSLNSC) are extracellular. Residues 311–331 (HIVSALISGFCGTLSTISTFI) traverse the membrane as a helical segment. At 332 to 338 (NEGYKLS) the chain is on the cytoplasmic side. Residues 339–359 (FINMLIYYTVSIAISYCLLVI) form a helical membrane-spanning segment. The Extracellular portion of the chain corresponds to 360–375 (TLGSYAWTRGLTNPIC).

This sequence belongs to the fluoride channel Fluc/FEX (TC 1.A.43) family.

Its subcellular location is the cell membrane. The catalysed reaction is fluoride(in) = fluoride(out). In terms of biological role, fluoride channel required for the rapid expulsion of cytoplasmic fluoride. The chain is Fluoride export protein 1 from Saccharomyces cerevisiae (strain ATCC 204508 / S288c) (Baker's yeast).